Here is a 568-residue protein sequence, read N- to C-terminus: Glucose-6-phosphate isomerase, cytosolic (568 aa).

The Proton donor role is filled by Glu-360. Residues His-391 and Lys-516 contribute to the active site.

It belongs to the GPI family. As to quaternary structure, homodimer.

It localises to the cytoplasm. The enzyme catalyses alpha-D-glucose 6-phosphate = beta-D-fructose 6-phosphate. It functions in the pathway carbohydrate degradation; glycolysis; D-glyceraldehyde 3-phosphate and glycerone phosphate from D-glucose: step 2/4. In Oenothera sinuata var. hirsuta (Mexican evening primrose), this protein is Glucose-6-phosphate isomerase, cytosolic (PGIC).